A 462-amino-acid polypeptide reads, in one-letter code: Argininosuccinate lyase (462 aa).

This sequence belongs to the lyase 1 family. Argininosuccinate lyase subfamily.

The protein resides in the cytoplasm. It catalyses the reaction 2-(N(omega)-L-arginino)succinate = fumarate + L-arginine. It participates in amino-acid biosynthesis; L-arginine biosynthesis; L-arginine from L-ornithine and carbamoyl phosphate: step 3/3. This is Argininosuccinate lyase from Streptococcus agalactiae serotype V (strain ATCC BAA-611 / 2603 V/R).